The following is a 282-amino-acid chain: Bifunctional protein FolD (282 aa).

NADP(+) contacts are provided by residues 165–167 (GAS) and I231.

The protein belongs to the tetrahydrofolate dehydrogenase/cyclohydrolase family. As to quaternary structure, homodimer.

It carries out the reaction (6R)-5,10-methylene-5,6,7,8-tetrahydrofolate + NADP(+) = (6R)-5,10-methenyltetrahydrofolate + NADPH. The catalysed reaction is (6R)-5,10-methenyltetrahydrofolate + H2O = (6R)-10-formyltetrahydrofolate + H(+). It participates in one-carbon metabolism; tetrahydrofolate interconversion. Functionally, catalyzes the oxidation of 5,10-methylenetetrahydrofolate to 5,10-methenyltetrahydrofolate and then the hydrolysis of 5,10-methenyltetrahydrofolate to 10-formyltetrahydrofolate. This chain is Bifunctional protein FolD, found in Francisella philomiragia subsp. philomiragia (strain ATCC 25017 / CCUG 19701 / FSC 153 / O#319-036).